Reading from the N-terminus, the 257-residue chain is Imidazole glycerol phosphate synthase subunit HisF (257 aa).

Active-site residues include aspartate 11 and aspartate 130.

Belongs to the HisA/HisF family. As to quaternary structure, heterodimer of HisH and HisF.

The protein resides in the cytoplasm. It catalyses the reaction 5-[(5-phospho-1-deoxy-D-ribulos-1-ylimino)methylamino]-1-(5-phospho-beta-D-ribosyl)imidazole-4-carboxamide + L-glutamine = D-erythro-1-(imidazol-4-yl)glycerol 3-phosphate + 5-amino-1-(5-phospho-beta-D-ribosyl)imidazole-4-carboxamide + L-glutamate + H(+). It functions in the pathway amino-acid biosynthesis; L-histidine biosynthesis; L-histidine from 5-phospho-alpha-D-ribose 1-diphosphate: step 5/9. In terms of biological role, IGPS catalyzes the conversion of PRFAR and glutamine to IGP, AICAR and glutamate. The HisF subunit catalyzes the cyclization activity that produces IGP and AICAR from PRFAR using the ammonia provided by the HisH subunit. The protein is Imidazole glycerol phosphate synthase subunit HisF of Mannheimia succiniciproducens (strain KCTC 0769BP / MBEL55E).